A 299-amino-acid chain; its full sequence is GTPase Era (299 aa).

Residues 4–171 (KSGFVAILGR…IKLLTDNLEE (168 aa)) enclose the Era-type G domain. The G1 stretch occupies residues 12–19 (GRPNVGKS). 12 to 19 (GRPNVGKS) lines the GTP pocket. The segment at 38 to 42 (QTTRN) is G2. Residues 59–62 (DTPG) are G3. Residues 59–63 (DTPGI) and 121–124 (NKID) each bind GTP. Residues 121-124 (NKID) are G4. Positions 150–152 (ISA) are G5. The KH type-2 domain occupies 202-280 (TQQEVPHSVA…YLETWVKVKK (79 aa)).

Belongs to the TRAFAC class TrmE-Era-EngA-EngB-Septin-like GTPase superfamily. Era GTPase family. In terms of assembly, monomer.

Its subcellular location is the cytoplasm. It localises to the cell membrane. In terms of biological role, an essential GTPase that binds both GDP and GTP, with rapid nucleotide exchange. Plays a role in 16S rRNA processing and 30S ribosomal subunit biogenesis and possibly also in cell cycle regulation and energy metabolism. The sequence is that of GTPase Era from Streptococcus agalactiae serotype III (strain NEM316).